Here is a 188-residue protein sequence, read N- to C-terminus: Actin-related protein 2/3 complex subunit 3 (188 aa).

It belongs to the ARPC3 family. As to quaternary structure, component of the Arp2/3 complex.

It is found in the cytoplasm. The protein localises to the cytoskeleton. Functions as a component of the Arp2/3 complex which is involved in regulation of actin polymerization and together with an activating nucleation-promoting factor (NPF) mediates the formation of branched actin networks. The protein is Actin-related protein 2/3 complex subunit 3 of Entamoeba histolytica (strain ATCC 30459 / HM-1:IMSS / ABRM).